The primary structure comprises 954 residues: Bifunctional endo-1,4-beta-xylanase XylA (954 aa).

The segment at residues 1 to 27 (MKLSKIKKVLSGTVSALMIASAAPVVA) is a signal peptide (or 28, or 29). Residues 29-236 (AADQQTRGNV…SNGSANVKSV (208 aa)) form the GH11 domain. The active-site Nucleophile is the glutamate 122. Glutamate 223 (proton donor) is an active-site residue. A compositionally biased stretch (polar residues) spans 233–243 (VKSVSVTQGGS). The segment at 233–628 (VKSVSVTQGG…NNNNSAGSSD (396 aa)) is disordered. Residues 246–622 (NGGQQQNNDW…WNQGQQNNNN (377 aa)) show a composition bias toward low complexity. Residues 624-952 (AGSSDSLKGA…KPAYDRVMAL (329 aa)) enclose the GH10 domain. Glutamate 774 functions as the Proton donor in the catalytic mechanism. The Nucleophile role is filled by glutamate 884.

It in the N-terminal section; belongs to the glycosyl hydrolase 11 (cellulase G) family. In the C-terminal section; belongs to the glycosyl hydrolase 10 (cellulase F) family.

It catalyses the reaction Endohydrolysis of (1-&gt;4)-beta-D-xylosidic linkages in xylans.. Its pathway is glycan degradation; xylan degradation. Its function is as follows. Xylanase domain releases more xylo-oligosaccharides and GH10 domain more xylose. The sequence is that of Bifunctional endo-1,4-beta-xylanase XylA (xynA) from Ruminococcus flavefaciens.